We begin with the raw amino-acid sequence, 513 residues long: Proline-rich receptor-like protein kinase PERK3 (513 aa).

Over 1–123 (MARSNRCVPQ…SPPSPSRLST (123 aa)) the chain is Extracellular. Asn11 carries an N-linked (GlcNAc...) asparagine glycan. Over residues 27–36 (LKSRWQQITM) the composition is skewed to polar residues. The segment at 27–119 (LKSRWQQITM…GFSLSPPSPS (93 aa)) is disordered. Asn66 is a glycosylation site (N-linked (GlcNAc...) asparagine). The span at 78–89 (PSTSTPPRLGNR) shows a compositional bias: low complexity. Positions 99-111 (GQEPTTPTMTPGF) are enriched in polar residues. Residues 124–144 (GAVVGISIGGGVFVLTLIFFL) form a helical membrane-spanning segment. The Cytoplasmic portion of the chain corresponds to 145 to 513 (CKKKRPRDDK…TAQRYGGDSL (369 aa)). Thr172 carries the phosphothreonine modification. A Protein kinase domain is found at 183–334 (FSEANLLGEG…DFGLAKIALD (152 aa)). Residues 189-197 (LGEGGFGFV) and Lys211 each bind ATP. Tyr256 carries the post-translational modification Phosphotyrosine. The active-site Proton acceptor is the Asp307. Ser340 carries the phosphoserine modification. Phosphothreonine occurs at positions 341 and 346. A Phosphotyrosine modification is found at Tyr354.

It belongs to the protein kinase superfamily. Ser/Thr protein kinase family. As to expression, expressed at low levels in inflorescence bolt, flower buds, siliques, roots, seedlings and leaves.

Its subcellular location is the cell membrane. The enzyme catalyses L-seryl-[protein] + ATP = O-phospho-L-seryl-[protein] + ADP + H(+). It carries out the reaction L-threonyl-[protein] + ATP = O-phospho-L-threonyl-[protein] + ADP + H(+). The sequence is that of Proline-rich receptor-like protein kinase PERK3 (PERK3) from Arabidopsis thaliana (Mouse-ear cress).